The primary structure comprises 347 residues: MRAVVVVTGLVVVVVTTTLSLQDHDVKSASSPLSSSVDQGSSGDDCDEGLPPPDQPFRVVWNHPDNCEKINLHLPLDEYGIIFNKRRVFLGEEIQTLYDTGPWPYINKTGCFINGGLPQLFNQPDNSETCKILGKNRIEDFTGLGVLDFETWRAIYSTNFGTMENYQIESVNLVRKRHPDYSEKELKMVAEQEWQEAARKIMTDKLAAGQSLMPRGYWGYYLYPRTWDSKPDTKFRNNKIDWLWRQSTGLYPSIYIYYDVVSKTDSVITKFVSDTVGEAVRVQNDFSPPNTPIYPYVMFQTMDNVFHKEDHMKISLGLSAKMGAAGVILWGSSQNYKDFTTQCSRLQ.

The signal sequence occupies residues 1 to 18 (MRAVVVVTGLVVVVVTTT). A propeptide spanning residues 19–33 (LSLQDHDVKSASSPL) is cleaved from the precursor. The segment at 27–49 (KSASSPLSSSVDQGSSGDDCDEG) is disordered. Low complexity predominate over residues 28–43 (SASSPLSSSVDQGSSG). Cys-67 and Cys-343 are disulfide-bonded. Glu-150 acts as the Proton donor in catalysis.

The protein belongs to the glycosyl hydrolase 56 family. In terms of processing, contains 4 disulfide bonds. Post-translationally, is N-linked glycosylated at three positions. Expressed by the venom duct.

The protein resides in the secreted. It carries out the reaction Random hydrolysis of (1-&gt;4)-linkages between N-acetyl-beta-D-glucosamine and D-glucuronate residues in hyaluronate.. Hyaluronidase catalyzes the hydrolysis of hyaluronic acid (HA), an anionic, nonsulfated glycosaminoglycan distributed widely throughout connective, epithelial, and neural tissues. In venom, they are known to enhance diffusion of the venom by degrading the extracellular matrix. The protein is Hyaluronidase conohyal-ad1 of Conus adamsonii (Rhododendron cone).